We begin with the raw amino-acid sequence, 56 residues long: Preprotein translocase subunit SecG (56 aa).

The Cytoplasmic portion of the chain corresponds to 1-29 (MAKEKATLPPTGAGLMRFFDEDTRAVKVS). A helical membrane pass occupies residues 30–49 (PKGVIALTLLLIAFEFILHM). The Extracellular segment spans residues 50–56 (FGSSIFG).

Belongs to the SEC61-beta family. As to quaternary structure, component of the protein translocase complex. Heterotrimer consisting of alpha (SecY), beta (SecG) and gamma (SecE) subunits. Can form oligomers of the heterotrimer.

It localises to the cell membrane. Functionally, involved in protein export. The function of the beta subunit is unknown, but it may be involved in stabilization of the trimeric complex. In Thermococcus kodakarensis (strain ATCC BAA-918 / JCM 12380 / KOD1) (Pyrococcus kodakaraensis (strain KOD1)), this protein is Preprotein translocase subunit SecG.